Reading from the N-terminus, the 104-residue chain is Large ribosomal subunit protein bL27 (104 aa).

The propeptide occupies 1–15 (MNNKYFLTKIDLQFF).

This sequence belongs to the bacterial ribosomal protein bL27 family. In terms of processing, the N-terminus is cleaved by ribosomal processing cysteine protease Prp.

The chain is Large ribosomal subunit protein bL27 from Mycoplasma pneumoniae (strain ATCC 29342 / M129 / Subtype 1) (Mycoplasmoides pneumoniae).